Consider the following 524-residue polypeptide: Beta-glucosidase 22 (524 aa).

The signal sequence occupies residues M1–A24. Q55 is a binding site for a beta-D-glucoside. N-linked (GlcNAc...) asparagine glycosylation occurs at N61. A beta-D-glucoside is bound by residues H158 and N203–E204. E204 acts as the Proton donor in catalysis. Cysteines 223 and 230 form a disulfide. A beta-D-glucoside is bound by residues Y346, E418, W468, E475–W476, and F484. Catalysis depends on E418, which acts as the Nucleophile. Residue N494 is glycosylated (N-linked (GlcNAc...) asparagine). The Prevents secretion from ER motif lies at K521–L524.

It belongs to the glycosyl hydrolase 1 family. In terms of assembly, component of the PYK10 complex, at least composed of PYK10/BGLU23, BGLU21, BGLU22, JAL22, JAL23, PBP1/JAL30, PBP2/JAL31, JAL32, JAL33, JAL34, JAL35, GLL22 and GLL23. Expressed exclusively in roots.

It localises to the endoplasmic reticulum lumen. It catalyses the reaction Hydrolysis of terminal, non-reducing beta-D-glucosyl residues with release of beta-D-glucose.. With respect to regulation, activated upon binding to PBP1 or PBP2. Functionally, beta-D-glucosidase active on scopolin &gt;&gt; esculin &gt;&gt; 4-MU-glucoside. No activity with DIMBOA-glucoside, pNP-glucoside, oNP-glucoside and sinigrin as substrates. This is Beta-glucosidase 22 from Arabidopsis thaliana (Mouse-ear cress).